Here is a 246-residue protein sequence, read N- to C-terminus: tRNA (guanine-N(7)-)-methyltransferase (246 aa).

Positions 77, 102, 129, and 152 each coordinate S-adenosyl-L-methionine. The active site involves D152. Residues K156, D188, and 225 to 228 (TKFE) each bind substrate.

The protein belongs to the class I-like SAM-binding methyltransferase superfamily. TrmB family.

The catalysed reaction is guanosine(46) in tRNA + S-adenosyl-L-methionine = N(7)-methylguanosine(46) in tRNA + S-adenosyl-L-homocysteine. Its pathway is tRNA modification; N(7)-methylguanine-tRNA biosynthesis. Functionally, catalyzes the formation of N(7)-methylguanine at position 46 (m7G46) in tRNA. In Haemophilus influenzae (strain 86-028NP), this protein is tRNA (guanine-N(7)-)-methyltransferase.